The following is a 217-amino-acid chain: Probable transaldolase (217 aa).

The active-site Schiff-base intermediate with substrate is Lys-83.

This sequence belongs to the transaldolase family. Type 3B subfamily.

It localises to the cytoplasm. It carries out the reaction D-sedoheptulose 7-phosphate + D-glyceraldehyde 3-phosphate = D-erythrose 4-phosphate + beta-D-fructose 6-phosphate. Its pathway is carbohydrate degradation; pentose phosphate pathway; D-glyceraldehyde 3-phosphate and beta-D-fructose 6-phosphate from D-ribose 5-phosphate and D-xylulose 5-phosphate (non-oxidative stage): step 2/3. Functionally, transaldolase is important for the balance of metabolites in the pentose-phosphate pathway. The sequence is that of Probable transaldolase from Ruegeria sp. (strain TM1040) (Silicibacter sp.).